The chain runs to 553 residues: RNA N(6)-adenosine-methyltransferase METTL16 (553 aa).

The segment at 17–20 is RNA-binding; sequence PPDF. Residues arginine 82, glycine 110, serine 114, glutamate 133, threonine 164, and asparagine 184 each contribute to the S-adenosyl-L-methionine site. A K-loop region spans residues 163-167; the sequence is KTLLM. RNA-binding stretches follow at residues 199–211, 250–254, and 277–283; these read SRNS…SSVN, GKKCS, and QGRTMRW. Positions 289–400 are VCR 1; the sequence is FYDDVTVPSP…QLREVPRAPE (112 aa). Phosphoserine occurs at positions 329, 425, and 429. Residues 457 to 496 form a disordered region; that stretch reads EETPEATEDERDEERGGMEAMESCKGSSNGAQDGEASEKG. A compositionally biased stretch (acidic residues) spans 458–468; the sequence is ETPEATEDERD. Threonine 463 is modified (phosphothreonine). The interval 506–553 is VCR 2; sequence YLFKCLVNIKKEAGDAVVEMHWVEGQNRDLMNQLCTYVRNQILRLVAS.

The protein belongs to the methyltransferase superfamily. METTL16/RlmF family. Interacts with MEPCE. Interacts with LARP7.

Its subcellular location is the nucleus. It localises to the cytoplasm. The enzyme catalyses adenosine in U6 snRNA + S-adenosyl-L-methionine = N(6)-methyladenosine in U6 snRNA + S-adenosyl-L-homocysteine + H(+). It catalyses the reaction an adenosine in mRNA + S-adenosyl-L-methionine = an N(6)-methyladenosine in mRNA + S-adenosyl-L-homocysteine + H(+). Its activity is regulated as follows. Methyltransferase activity is autoinhibited by the K-loop region that blocks S-adenosyl-L-methionine-binding. Upon activation, K-loop changes conformation, allowing S-adenosyl-L-methionine-binding and subsequent methyltransferase activity. mRNA N6-adenosine-methyltransferase activity is inhibited by zinc. Its function is as follows. RNA N6-methyltransferase that methylates adenosine residues at the N(6) position of a subset of RNAs and is involved in S-adenosyl-L-methionine homeostasis by regulating expression of MAT2A transcripts. Able to N6-methylate a subset of mRNAs and U6 small nuclear RNAs (U6 snRNAs). In contrast to the METTL3-METTL14 heterodimer, only able to methylate a limited number of RNAs: requires both a 5'UACAGAGAA-3' nonamer sequence and a specific RNA structure. Plays a key role in S-adenosyl-L-methionine homeostasis by mediating N6-methylation of MAT2A mRNAs, altering splicing of MAT2A transcripts: in presence of S-adenosyl-L-methionine, binds the 3'-UTR region of MAT2A mRNA and specifically N6-methylates the first hairpin of MAT2A mRNA, preventing recognition of their 3'-splice site by U2AF1/U2AF35, thereby inhibiting splicing and protein production of S-adenosylmethionine synthase. In S-adenosyl-L-methionine-limiting conditions, binds the 3'-UTR region of MAT2A mRNA but stalls due to the lack of a methyl donor, preventing N6-methylation and promoting expression of MAT2A. In addition to mRNAs, also able to mediate N6-methylation of U6 small nuclear RNA (U6 snRNA): specifically N6-methylates adenine in position 43 of U6 snRNAs. Also able to bind various lncRNAs, such as 7SK snRNA (7SK RNA) or 7SL RNA. Specifically binds the 3'-end of the MALAT1 long non-coding RNA. This Mus musculus (Mouse) protein is RNA N(6)-adenosine-methyltransferase METTL16.